A 331-amino-acid chain; its full sequence is Beta-ketoacyl-[acyl-carrier-protein] synthase III (331 aa).

Active-site residues include cysteine 113 and histidine 253. Residues 254–258 (QANTR) are ACP-binding. Asparagine 283 is an active-site residue.

The protein belongs to the thiolase-like superfamily. FabH family. In terms of assembly, homodimer.

It localises to the cytoplasm. It carries out the reaction malonyl-[ACP] + acetyl-CoA + H(+) = 3-oxobutanoyl-[ACP] + CO2 + CoA. It functions in the pathway lipid metabolism; fatty acid biosynthesis. Its function is as follows. Catalyzes the condensation reaction of fatty acid synthesis by the addition to an acyl acceptor of two carbons from malonyl-ACP. Catalyzes the first condensation reaction which initiates fatty acid synthesis and may therefore play a role in governing the total rate of fatty acid production. Possesses both acetoacetyl-ACP synthase and acetyl transacylase activities. Its substrate specificity determines the biosynthesis of branched-chain and/or straight-chain of fatty acids. This chain is Beta-ketoacyl-[acyl-carrier-protein] synthase III, found in Desulfitobacterium hafniense (strain Y51).